Reading from the N-terminus, the 324-residue chain is Viral cathepsin (324 aa).

An N-terminal signal peptide occupies residues 1–16; sequence MNKIVLYLLVYGAVQC. Positions 17-113 are cleaved as a propeptide — activation peptide; it reads AAYDVLKAPN…VVLDRPPDKG (97 aa). 3 disulfides stabilise this stretch: Cys134/Cys175, Cys168/Cys208, and Cys263/Cys311. Residue Cys137 is part of the active site. The N-linked (GlcNAc...) asparagine; by host glycan is linked to Asn159. Catalysis depends on residues His270 and Asn290.

This sequence belongs to the peptidase C1 family. Synthesized as an inactive proenzyme and activated by proteolytic removal of the inhibitory propeptide.

It carries out the reaction Endopeptidase of broad specificity, hydrolyzing substrates of both cathepsin L and cathepsin B.. In terms of biological role, cysteine protease that plays an essential role in host liquefaction to facilitate horizontal transmission of the virus. May participate in the degradation of foreign protein expressed by the baculovirus system. The sequence is that of Viral cathepsin (Vcath) from Choristoneura fumiferana nuclear polyhedrosis virus (CfMNPV).